Reading from the N-terminus, the 276-residue chain is Palmitoyltransferase ZDHHC22 (276 aa).

Over 1–9 the chain is Cytoplasmic; the sequence is MGKLKLLNT. Residues 10-30 traverse the membrane as a helical segment; that stretch reads IAPAYFYAATVVTFALHFLLF. The Lumenal segment spans residues 31–45; sequence TPTIFQSSDVTINPA. The chain crosses the membrane as a helical span at residues 46 to 66; the sequence is MLAHISIFLFLMGNALGNYIM. Residues 67 to 131 lie on the Cytoplasmic side of the membrane; that stretch reads TIRNPSESAN…NCIGNRNMRY (65 aa). Residues 101 to 137 form the DHHC domain; it reads HFCKVCKKVILKRDHHCFFTGNCIGNRNMRYFIMFSI. The active-site S-palmitoyl cysteine intermediate is the Cys-117. The chain crosses the membrane as a helical span at residues 132 to 152; the sequence is FIMFSIYTSSSCLYSLVIGVA. The Lumenal portion of the chain corresponds to 153 to 165; that stretch reads YLTIEYSISFENP. Residues 166-186 form a helical membrane-spanning segment; that stretch reads LTFLTLLPLSTGYFFLGLISG. The Cytoplasmic portion of the chain corresponds to 187-188; the sequence is LQ. Residues 189–209 traverse the membrane as a helical segment; it reads FFLVIMLYIWLGIGLVSVGFC. Topologically, residues 210–276 are lumenal; it reads CQQLLLVARG…WQVYHDHKHD (67 aa).

The protein belongs to the DHHC palmitoyltransferase family.

The protein resides in the endoplasmic reticulum membrane. It is found in the golgi apparatus membrane. The enzyme catalyses L-cysteinyl-[protein] + hexadecanoyl-CoA = S-hexadecanoyl-L-cysteinyl-[protein] + CoA. Functionally, palmitoyltransferase that could catalyze the addition of palmitate onto various protein substrates and be involved in a variety of cellular processes. This is Palmitoyltransferase ZDHHC22 (zdhhc22) from Danio rerio (Zebrafish).